The chain runs to 2371 residues: NBAS subunit of NRZ tethering complex (2371 aa).

The tract at residues 1 to 1035 is interaction with USE1; sequence MAAPESGPAL…KTEATTKLHD (1035 aa). WD repeat units follow at residues 130-169 and 316-355; these read DPKP…LFVI and QEQD…QQGE. Ser473 and Ser475 each carry phosphoserine. Positions 1036-2371 are interaction with ZW10 and RINT1; that stretch reads MVDQLEQILS…TALRAAQHWV (1336 aa). Lys1057 bears the N6-acetyllysine mark.

Component of the NRZ complex composed of NBAS, ZW10 and RINT1/TIP20L; NRZ associates with SNAREs STX18, USE1, BNIP1/SEC20L and SEC22B (the assembly has been described as syntaxin 18 complex); links NRZ to SNARE USE1. As to expression, broadly expressed, with highest levels in heart and skeletal muscle, and lowest levels in liver, small intestine and thymus. Well expressed in retinal ganglion cells, epidermal skin cells, and leukocytes. Up-regulated together with N-myc in some neuroblastoma cell lines.

It is found in the cytoplasm. The protein localises to the endoplasmic reticulum. It localises to the endoplasmic reticulum membrane. In terms of biological role, involved in Golgi-to-endoplasmic reticulum (ER) retrograde transport; the function is proposed to depend on its association in the NRZ complex which is believed to play a role in SNARE assembly at the ER. Required for normal embryonic development. May play a role in the nonsense-mediated decay pathway of mRNAs containing premature stop codons. The sequence is that of NBAS subunit of NRZ tethering complex from Homo sapiens (Human).